The chain runs to 159 residues: uncharacterized protein (159 aa).

Positions 6–66 (LSKKDWEIIK…YLRFDKLGYT (61 aa)) constitute an HTH asnC-type domain. Positions 25–44 (DAEIGRRIGLSKSAVRWRRI) form a DNA-binding region, H-T-H motif.

This is an uncharacterized protein from Pyrococcus horikoshii (strain ATCC 700860 / DSM 12428 / JCM 9974 / NBRC 100139 / OT-3).